The chain runs to 1191 residues: Rho GTPase-activating protein 20 (1191 aa).

Over residues 1–23 the composition is skewed to polar residues; it reads MEAMSPQQETLGGQPGRSSSLTG. Positions 1-45 are disordered; sequence MEAMSPQQETLGGQPGRSSSLTGVSRLAGGSCTKKKMKTLAERRR. Serine 46 carries the post-translational modification Phosphoserine. The PH domain maps to 78-180; the sequence is SLVCSNRTLL…EQKDKWLSLL (103 aa). One can recognise a Ras-associating domain in the interval 194–295; the sequence is KSIPLKIFAK…TPFNLQEPFL (102 aa). In terms of domain architecture, Rho-GAP spans 365 to 551; sequence ISLPNICEND…FLIENCLRIF (187 aa). A phosphoserine mark is found at serine 704 and serine 730. Disordered stretches follow at residues 768–791, 926–1014, 1052–1123, and 1140–1191; these read SKKN…NHVK, RLNL…SRPA, KKAK…RHCS, and HEEI…TKDI. The span at 934–961 shows a compositional bias: low complexity; it reads SYSSLSSPGTSPSGSSVSSQDSAFSQIS. Composition is skewed to polar residues over residues 962–981 and 1103–1116; these read EHSV…TFQA and PVQS…SPFQ. A compositionally biased stretch (basic and acidic residues) spans 1182-1191; sequence IEDRYLTKDI.

As to expression, expressed predominantly in the brain. Lower expression is found in lymph nodes.

Functionally, GTPase activator for the Rho-type GTPases by converting them to an inactive GDP-bound state. The chain is Rho GTPase-activating protein 20 (ARHGAP20) from Homo sapiens (Human).